A 138-amino-acid chain; its full sequence is Basic phospholipase A2 Cll-N6 (138 aa).

A signal peptide spans 1-16; that stretch reads MRTFWIVAVLLVGVEG. 7 disulfides stabilise this stretch: C42–C131, C44–C60, C59–C111, C65–C138, C66–C104, C73–C97, and C91–C102. Ca(2+) is bound by residues Y43, G45, and G47. Residue H63 is part of the active site. Position 64 (D64) interacts with Ca(2+). D105 is an active-site residue.

In terms of assembly, monomer. It depends on Ca(2+) as a cofactor. As to expression, expressed by the venom gland.

It is found in the secreted. The catalysed reaction is a 1,2-diacyl-sn-glycero-3-phosphocholine + H2O = a 1-acyl-sn-glycero-3-phosphocholine + a fatty acid + H(+). Snake venom phospholipase A2 (PLA2) that shows myotoxic activities. PLA2 catalyzes the calcium-dependent hydrolysis of the 2-acyl groups in 3-sn-phosphoglycerides. This chain is Basic phospholipase A2 Cll-N6, found in Crotalus lepidus lepidus (Mottled rock rattlesnake).